The following is a 116-amino-acid chain: Large ribosomal subunit protein bL19 (116 aa).

It belongs to the bacterial ribosomal protein bL19 family.

Its function is as follows. This protein is located at the 30S-50S ribosomal subunit interface and may play a role in the structure and function of the aminoacyl-tRNA binding site. The polypeptide is Large ribosomal subunit protein bL19 (Staphylococcus carnosus (strain TM300)).